The chain runs to 348 residues: Aldose 1-epimerase (348 aa).

R80 contacts substrate. The active-site Proton donor is H180. D243 provides a ligand contact to substrate. E311 serves as the catalytic Proton acceptor.

The protein belongs to the aldose epimerase family.

The enzyme catalyses alpha-D-glucose = beta-D-glucose. Its pathway is carbohydrate metabolism; hexose metabolism. In terms of biological role, mutarotase converts alpha-aldose to the beta-anomer. It is active on D-glucose, L-arabinose, D-xylose, D-galactose, maltose and lactose. This Streptococcus thermophilus protein is Aldose 1-epimerase (galM).